The primary structure comprises 203 residues: Putative 3-methyladenine DNA glycosylase (203 aa).

Belongs to the DNA glycosylase MPG family.

This is Putative 3-methyladenine DNA glycosylase from Clostridium beijerinckii (strain ATCC 51743 / NCIMB 8052) (Clostridium acetobutylicum).